Consider the following 343-residue polypeptide: D-beta-hydroxybutyrate dehydrogenase, mitochondrial (343 aa).

A mitochondrion-targeting transit peptide spans 1–46; the sequence is MLAARLSRPLSQLPGKALSVCDRENGTRHTLLFYPASFSPDTRRTY. 59-83 contacts NAD(+); sequence LVTGCDSGFGFSLAKHLHSKGFLVF. K73 is subject to N6-acetyllysine. K103 bears the N6-acetyllysine; alternate mark. At K103 the chain carries N6-succinyllysine; alternate. N6-acetyllysine occurs at positions 132 and 177. S195 lines the substrate pocket. Y208 acts as the Proton acceptor in catalysis. An N6-acetyllysine modification is found at K212. S219 carries O-linked (GlcNAc) serine glycosylation. S246 bears the Phosphoserine mark. K258 carries the N6-acetyllysine modification. K259 bears the N6-acetyllysine; alternate mark. The residue at position 259 (K259) is an N6-succinyllysine; alternate. Position 280 is an N6-acetyllysine (K280).

Belongs to the short-chain dehydrogenases/reductases (SDR) family. As to quaternary structure, homotetramer. As to expression, expressed in liver.

The protein localises to the mitochondrion inner membrane. Its subcellular location is the mitochondrion matrix. The catalysed reaction is (R)-3-hydroxybutanoate + NAD(+) = acetoacetate + NADH + H(+). Requires phosphatidylcholine as an allosteric activator for enzymatic activity. The sequence is that of D-beta-hydroxybutyrate dehydrogenase, mitochondrial from Rattus norvegicus (Rat).